The sequence spans 404 residues: Probable tRNA sulfurtransferase (404 aa).

One can recognise a THUMP domain in the interval 60–165 (QPIVEALKLV…DEAAYISYEE (106 aa)). ATP-binding positions include 183–184 (ML), 208–209 (HF), R265, G287, and Q296.

It belongs to the ThiI family.

Its subcellular location is the cytoplasm. It carries out the reaction [ThiI sulfur-carrier protein]-S-sulfanyl-L-cysteine + a uridine in tRNA + 2 reduced [2Fe-2S]-[ferredoxin] + ATP + H(+) = [ThiI sulfur-carrier protein]-L-cysteine + a 4-thiouridine in tRNA + 2 oxidized [2Fe-2S]-[ferredoxin] + AMP + diphosphate. The catalysed reaction is [ThiS sulfur-carrier protein]-C-terminal Gly-Gly-AMP + S-sulfanyl-L-cysteinyl-[cysteine desulfurase] + AH2 = [ThiS sulfur-carrier protein]-C-terminal-Gly-aminoethanethioate + L-cysteinyl-[cysteine desulfurase] + A + AMP + 2 H(+). It participates in cofactor biosynthesis; thiamine diphosphate biosynthesis. Functionally, catalyzes the ATP-dependent transfer of a sulfur to tRNA to produce 4-thiouridine in position 8 of tRNAs, which functions as a near-UV photosensor. Also catalyzes the transfer of sulfur to the sulfur carrier protein ThiS, forming ThiS-thiocarboxylate. This is a step in the synthesis of thiazole, in the thiamine biosynthesis pathway. The sulfur is donated as persulfide by IscS. The sequence is that of Probable tRNA sulfurtransferase from Streptococcus pyogenes serotype M1.